The chain runs to 586 residues: MFS-type transporter ucsD (586 aa).

Positions 1–56 (MSRNSGTTLEDGPLHADPTTEAPNNATVTTNVTANDENTEKEVDADAAAAAPAEAP) are disordered. Low complexity-rich tracts occupy residues 19–36 (TTEA…TAND) and 46–56 (DAAAAAPAEAP). Residues asparagine 25 and asparagine 31 are each glycosylated (N-linked (GlcNAc...) asparagine). The next 8 helical transmembrane spans lie at 65 to 85 (WAIV…GTII), 101 to 121 (SFIW…PLMA), 131 to 151 (WLTL…GGAN), 164 to 184 (GFGG…LVPL), 192 to 212 (GIVQ…GGLL), 220 to 240 (WVFY…FFFL), 263 to 283 (AIFI…GAVY), and 290 to 310 (VIVP…YEWT). Asparagine 324 carries N-linked (GlcNAc...) asparagine glycosylation. 6 helical membrane-spanning segments follow: residues 330-350 (VLGV…FMPI), 368-388 (LPLF…LAKF), 393-413 (PMHL…SLLD), 420-440 (AWAC…AILL), 458-478 (VWTF…SAIF), and 532-552 (LRTV…LIWL).

This sequence belongs to the major facilitator superfamily.

Its subcellular location is the membrane. Functionally, MFS-type transporter; part of the gene cluster that mediates the biosynthesis of UCS1025A, a member of the pyrrolizidinone family that acts as a strong telomerase inhibitor and displays potent antibacterial and antitumor properties. These compounds share a hemiaminal-containing pyrrolizidinone core fused with a gamma-lactone, giving a furopyrrolizidine that is connected to a decalin fragment. This is MFS-type transporter ucsD from Acremonium sp.